We begin with the raw amino-acid sequence, 65 residues long: MEGSKRKHDSRRPQQEQEQPRPRTPPSYEEIAKYGHSFNVKRFTNEEMCLKNDYPRIISYNPPPK.

Over residues Met1–Ser10 the composition is skewed to basic residues. The interval Met1–Glu29 is disordered. The span at Arg11–Arg21 shows a compositional bias: basic and acidic residues.

The protein belongs to the orthopoxvirus OPG052 family.

The chain is Protein OPG052 (OPG052) from Homo sapiens (Human).